Consider the following 32-residue polypeptide: Beta-1,4-galactosyltransferase 1 (32 aa).

The protein belongs to the glycosyltransferase 7 family. Mn(2+) is required as a cofactor. In terms of processing, the soluble form derives from the membrane form by proteolytic processing.

The protein localises to the golgi apparatus. It is found in the golgi stack membrane. Its subcellular location is the secreted. The protein resides in the cell membrane. It localises to the cell projection. The protein localises to the filopodium. It carries out the reaction D-glucose + UDP-alpha-D-galactose = lactose + UDP + H(+). It catalyses the reaction an N-acetyl-beta-D-glucosaminyl derivative + UDP-alpha-D-galactose = a beta-D-galactosyl-(1-&gt;4)-N-acetyl-beta-D-glucosaminyl derivative + UDP + H(+). The catalysed reaction is N-acetyl-D-glucosamine + UDP-alpha-D-galactose = beta-D-galactosyl-(1-&gt;4)-N-acetyl-D-glucosamine + UDP + H(+). The enzyme catalyses a beta-D-GlcNAc-(1-&gt;3)-beta-D-Gal-(1-&gt;4)-beta-D-Glc-(1&lt;-&gt;1)-Cer(d18:1(4E)) + UDP-alpha-D-galactose = a neolactoside nLc4Cer(d18:1(4E)) + UDP + H(+). It carries out the reaction a beta-D-glucosylceramide + UDP-alpha-D-galactose = a beta-D-galactosyl-(1-&gt;4)-beta-D-glucosyl-(1&lt;-&gt;1)-ceramide + UDP + H(+). It catalyses the reaction a neolactoside IV(3)-beta-GlcNAc-nLc4Cer + UDP-alpha-D-galactose = a neolactoside nLc6Cer + UDP + H(+). It participates in protein modification; protein glycosylation. Its function is as follows. This protein is responsible for the synthesis of complex-type N-linked oligosaccharides in many glycoproteins as well as the carbohydrate moieties of glycolipids. This chain is Beta-1,4-galactosyltransferase 1, found in Rattus norvegicus (Rat).